Consider the following 186-residue polypeptide: UPF0669 protein C6orf120 homolog (186 aa).

A signal peptide spans 1–19 (MVPFWAGLLVLSALPQTLG). Asparagine 47 is a glycosylation site (N-linked (GlcNAc...) asparagine). Residues 141–165 (KNSYSSDETPGQPRQSQGPEDTEEE) are disordered. Residues 142–159 (NSYSSDETPGQPRQSQGP) are compositionally biased toward polar residues.

Belongs to the UPF0669 family.

Its subcellular location is the secreted. This is UPF0669 protein C6orf120 homolog from Danio rerio (Zebrafish).